The primary structure comprises 186 residues: Imidazole glycerol phosphate synthase subunit HisH (186 aa).

Positions 1 to 186 constitute a Glutamine amidotransferase type-1 domain; the sequence is MIAIIDYGSG…KLLRNFGELA (186 aa). Residue Cys72 is the Nucleophile of the active site. Catalysis depends on residues His167 and Glu169.

Heterodimer of HisH and HisF.

Its subcellular location is the cytoplasm. The enzyme catalyses 5-[(5-phospho-1-deoxy-D-ribulos-1-ylimino)methylamino]-1-(5-phospho-beta-D-ribosyl)imidazole-4-carboxamide + L-glutamine = D-erythro-1-(imidazol-4-yl)glycerol 3-phosphate + 5-amino-1-(5-phospho-beta-D-ribosyl)imidazole-4-carboxamide + L-glutamate + H(+). The catalysed reaction is L-glutamine + H2O = L-glutamate + NH4(+). Its pathway is amino-acid biosynthesis; L-histidine biosynthesis; L-histidine from 5-phospho-alpha-D-ribose 1-diphosphate: step 5/9. Its function is as follows. IGPS catalyzes the conversion of PRFAR and glutamine to IGP, AICAR and glutamate. The HisH subunit catalyzes the hydrolysis of glutamine to glutamate and ammonia as part of the synthesis of IGP and AICAR. The resulting ammonia molecule is channeled to the active site of HisF. The chain is Imidazole glycerol phosphate synthase subunit HisH from Picrophilus torridus (strain ATCC 700027 / DSM 9790 / JCM 10055 / NBRC 100828 / KAW 2/3).